Reading from the N-terminus, the 234-residue chain is MKFSFVSLFPNLMEFYFKDSILARAKEKKLFKLNFYNPRDFSKNSYHKVDDYKIGGGAGLLIQAEPMYEVLRSIQEKKENPYFIFLNPSGKTFNQKDAKRLSKKEHIVFVCGRYEGIDERVLEIFANEVFSIGDFILTGGELPALVMCDAILRNVNGVLGNMESLEEESFENNLFEAPAFSKPFIFEKKNKKFYTPSEFLKGNHARIASLKTTLASCKTKFFRPDLFLEHERKK.

S-adenosyl-L-methionine is bound by residues Gly112 and Ile132 to Leu137.

Belongs to the RNA methyltransferase TrmD family. As to quaternary structure, homodimer.

Its subcellular location is the cytoplasm. It carries out the reaction guanosine(37) in tRNA + S-adenosyl-L-methionine = N(1)-methylguanosine(37) in tRNA + S-adenosyl-L-homocysteine + H(+). Its function is as follows. Specifically methylates guanosine-37 in various tRNAs. This chain is tRNA (guanine-N(1)-)-methyltransferase, found in Campylobacter jejuni subsp. doylei (strain ATCC BAA-1458 / RM4099 / 269.97).